A 460-amino-acid chain; its full sequence is T-box transcription factor TBX1 (460 aa).

2 disordered regions span residues 30-53 (LNTPGSYHLSPSPGDPYSHHESQF) and 67-99 (GSNSAQAPAQGDSGTSNCSSSSSSSTPNKTLVK). Residues 67 to 84 (GSNSAQAPAQGDSGTSNC) show a composition bias toward polar residues. A DNA-binding region (T-box) is located at residues 116 to 294 (LWDEFNQLGT…SNPFAKGFRD (179 aa)). Disordered stretches follow at residues 317–355 (RTRNPMSSPPQQNGTEKEDSRREYDRDPSGNPLHSDPTH) and 376–400 (PLTAGPRSPPHELRLDGHPQPPDTL). The segment covering 320 to 330 (NPMSSPPQQNG) has biased composition (polar residues). Positions 331-344 (TEKEDSRREYDRDP) are enriched in basic and acidic residues. The short motif at 418 to 429 (KTRPSPYPSPSI) is the Nuclear localization signal element.

In terms of assembly, binds DNA as a dimer. In terms of tissue distribution, expressed in the ear and mesendodermal components of pharyngeal arches.

The protein localises to the nucleus. Its function is as follows. Probable transcriptional regulator involved in developmental processes. Binds to the palindromic T site 5'-TTCACACCTAGGTGTGAA-3' DNA sequence. Is required for normal development of the pharyngeal arch arteries. Acts cell autonomously in the pharyngeal mesendoderm and influences the development of neural crest-derived cartilages secondarily. In Danio rerio (Zebrafish), this protein is T-box transcription factor TBX1 (tbx1).